Here is a 380-residue protein sequence, read N- to C-terminus: L-lactate dehydrogenase (380 aa).

In terms of domain architecture, FMN hydroxy acid dehydrogenase spans 1-380; that stretch reads MIISASTDYR…SADSLVQGLR (380 aa). Substrate is bound at residue Tyr-24. FMN contacts are provided by Ser-106 and Gln-127. A substrate-binding site is contributed by Tyr-129. Position 155 (Thr-155) interacts with FMN. Substrate is bound at residue Arg-164. Position 251 (Lys-251) interacts with FMN. The active-site Proton acceptor is His-275. A substrate-binding site is contributed by Arg-278. 306–330 contributes to the FMN binding site; it reads DSGIRSGLDVVRMIALGADGVLLGR.

The protein belongs to the FMN-dependent alpha-hydroxy acid dehydrogenase family. The cofactor is FMN.

The protein resides in the cell inner membrane. It catalyses the reaction (S)-lactate + A = pyruvate + AH2. Functionally, catalyzes the conversion of L-lactate to pyruvate. Is coupled to the respiratory chain. The sequence is that of L-lactate dehydrogenase from Serratia proteamaculans (strain 568).